A 110-amino-acid chain; its full sequence is Insulin (110 aa).

A signal peptide spans 1–24 (MALWMRLLPLLALLALWGPDPVPA). Cystine bridges form between Cys-31–Cys-96, Cys-43–Cys-109, and Cys-95–Cys-100. Positions 57–87 (EAEDPQVGQVELGGGPGAGSLQPLALEGSLQ) are cleaved as a propeptide — c peptide.

Belongs to the insulin family. As to quaternary structure, heterodimer of a B chain and an A chain linked by two disulfide bonds.

The protein localises to the secreted. Its function is as follows. Insulin decreases blood glucose concentration. It increases cell permeability to monosaccharides, amino acids and fatty acids. It accelerates glycolysis, the pentose phosphate cycle, and glycogen synthesis in liver. In Chlorocebus aethiops (Green monkey), this protein is Insulin (INS).